The chain runs to 373 residues: Dynein regulatory complex protein 9 (373 aa).

The stretch at 145–200 (EQAMKETIEREKNTTAAVRQLRNDLREEKLDHEEKMKEKKKGLSTLKEQLKALKMD) forms a coiled coil. In terms of domain architecture, IQ spans 336–365 (RAQAAVIIQAWWRGHKVRMVMSGGGKKGAK).

The protein belongs to the DRC9 family. Component of the nexin-dynein regulatory complex (N-DRC).

It is found in the cytoplasm. Its subcellular location is the cytoskeleton. The protein resides in the flagellum axoneme. In terms of biological role, component of the nexin-dynein regulatory complex (N-DRC), a key regulator of ciliary/flagellar motility which maintains the alignment and integrity of the distal axoneme and regulates microtubule sliding in motile axonemes. This Chlamydomonas reinhardtii (Chlamydomonas smithii) protein is Dynein regulatory complex protein 9.